A 281-amino-acid chain; its full sequence is Probable endonuclease 4 (281 aa).

9 residues coordinate Zn(2+): His69, His109, Glu145, Asp179, His182, His216, Asp229, His231, and Glu261.

Belongs to the AP endonuclease 2 family. Zn(2+) serves as cofactor.

It catalyses the reaction Endonucleolytic cleavage to 5'-phosphooligonucleotide end-products.. Functionally, endonuclease IV plays a role in DNA repair. It cleaves phosphodiester bonds at apurinic or apyrimidinic (AP) sites, generating a 3'-hydroxyl group and a 5'-terminal sugar phosphate. This Nautilia profundicola (strain ATCC BAA-1463 / DSM 18972 / AmH) protein is Probable endonuclease 4.